A 198-amino-acid chain; its full sequence is Nucleoid occlusion factor SlmA (198 aa).

An HTH tetR-type domain is found at 10-70 (NRREEILQSL…SLIEFIEDSL (61 aa)). Positions 33–52 (TTAKLAASVGVSEAALYRHF) form a DNA-binding region, H-T-H motif. Residues 117–144 (EQDRLQGRINQLFERIEAQLRQVLREKR) are a coiled coil.

This sequence belongs to the nucleoid occlusion factor SlmA family. As to quaternary structure, homodimer. Interacts with FtsZ.

It is found in the cytoplasm. Its subcellular location is the nucleoid. Functionally, required for nucleoid occlusion (NO) phenomenon, which prevents Z-ring formation and cell division over the nucleoid. Acts as a DNA-associated cell division inhibitor that binds simultaneously chromosomal DNA and FtsZ, and disrupts the assembly of FtsZ polymers. SlmA-DNA-binding sequences (SBS) are dispersed on non-Ter regions of the chromosome, preventing FtsZ polymerization at these regions. This Escherichia coli O45:K1 (strain S88 / ExPEC) protein is Nucleoid occlusion factor SlmA.